Here is a 345-residue protein sequence, read N- to C-terminus: L-threonine 3-dehydrogenase (345 aa).

Cysteine 42 contributes to the Zn(2+) binding site. Residues threonine 44 and histidine 47 each act as charge relay system in the active site. Positions 67, 68, 97, 100, 103, and 111 each coordinate Zn(2+). Residues isoleucine 179, aspartate 199, arginine 204, 266–268, and 290–291 contribute to the NAD(+) site; these read LGI and IY.

The protein belongs to the zinc-containing alcohol dehydrogenase family. Homotetramer. Requires Zn(2+) as cofactor.

It localises to the cytoplasm. The enzyme catalyses L-threonine + NAD(+) = (2S)-2-amino-3-oxobutanoate + NADH + H(+). It functions in the pathway amino-acid degradation; L-threonine degradation via oxydo-reductase pathway; glycine from L-threonine: step 1/2. In terms of biological role, catalyzes the NAD(+)-dependent oxidation of L-threonine to 2-amino-3-ketobutyrate. The chain is L-threonine 3-dehydrogenase from Rhizobium johnstonii (strain DSM 114642 / LMG 32736 / 3841) (Rhizobium leguminosarum bv. viciae).